Here is a 205-residue protein sequence, read N- to C-terminus: Arginine exporter protein ArgO (205 aa).

6 helical membrane passes run 1-21, 42-62, 67-87, 111-131, 147-167, and 182-202; these read MLAV…PLGP, LCAL…SALL, LLLA…GWGA, IIVT…DTFV, WFAF…ALLA, and VINL…ARQG.

It belongs to the LysE/ArgO transporter (TC 2.A.75) family.

It localises to the cell inner membrane. The enzyme catalyses L-arginine(in) = L-arginine(out). Involved in the export of arginine. Important to control the intracellular level of arginine and the correct balance between arginine and lysine. This Yersinia enterocolitica serotype O:8 / biotype 1B (strain NCTC 13174 / 8081) protein is Arginine exporter protein ArgO.